We begin with the raw amino-acid sequence, 893 residues long: Translation initiation factor IF-2 (893 aa).

The tract at residues 1 to 266 (MVDTKNPGDK…AKPAPSKQRG (266 aa)) is disordered. Positions 59–70 (PADAPTAAAAAP) are enriched in low complexity. The span at 71 to 92 (APAPAPVPSAAPRPAAPPPPSR) shows a compositional bias: pro residues. The span at 93–104 (PQQSRSQSPSRS) shows a compositional bias: low complexity. 2 stretches are compositionally biased toward basic and acidic residues: residues 128–148 (ARVR…RRNS) and 155–196 (AERE…EAKR). Positions 197-226 (PAAAATPAKSATPAARPTGAPAVRAPGVAA) are enriched in low complexity. The tr-type G domain maps to 389 to 560 (PRSPVVTVMG…ALQAELLDLK (172 aa)). A G1 region spans residues 398-405 (GHVDHGKT). Position 398–405 (398–405 (GHVDHGKT)) interacts with GTP. Residues 423 to 427 (GITQH) form a G2 region. The interval 446–449 (DTPG) is G3. GTP-binding positions include 446–450 (DTPGH) and 500–503 (NKID). Residues 500–503 (NKID) are G4. A G5 region spans residues 536 to 538 (SAK).

Belongs to the TRAFAC class translation factor GTPase superfamily. Classic translation factor GTPase family. IF-2 subfamily.

It localises to the cytoplasm. One of the essential components for the initiation of protein synthesis. Protects formylmethionyl-tRNA from spontaneous hydrolysis and promotes its binding to the 30S ribosomal subunits. Also involved in the hydrolysis of GTP during the formation of the 70S ribosomal complex. This is Translation initiation factor IF-2 from Rhodopseudomonas palustris (strain BisA53).